We begin with the raw amino-acid sequence, 196 residues long: Chromophore lyase CpcS/CpeS 2 (196 aa).

It belongs to the CpcS/CpeS biliprotein lyase family.

Its function is as follows. Covalently attaches a chromophore to Cys residue(s) of phycobiliproteins. In Trichodesmium erythraeum (strain IMS101), this protein is Chromophore lyase CpcS/CpeS 2.